A 299-amino-acid polypeptide reads, in one-letter code: Ethylmalonyl-CoA decarboxylase (299 aa).

This sequence belongs to the enoyl-CoA hydratase/isomerase family.

It localises to the cytoplasm. The protein localises to the cytosol. It carries out the reaction (2S)-ethylmalonyl-CoA + H(+) = butanoyl-CoA + CO2. It catalyses the reaction (S)-methylmalonyl-CoA + H(+) = propanoyl-CoA + CO2. The enzyme catalyses (2R)-ethylmalonyl-CoA + H(+) = butanoyl-CoA + CO2. Its function is as follows. Decarboxylates ethylmalonyl-CoA, a potentially toxic metabolite, to form butyryl-CoA, suggesting it might be involved in metabolite proofreading. Acts preferentially on (S)-ethylmalonyl-CoA but also has some activity on the (R)-isomer. Also has methylmalonyl-CoA decarboxylase activity at lower level. This Xenopus laevis (African clawed frog) protein is Ethylmalonyl-CoA decarboxylase (echdc1).